An 863-amino-acid polypeptide reads, in one-letter code: Leucine--tRNA ligase (863 aa).

The short motif at 42–52 is the 'HIGH' region element; the sequence is PYPSGRLHMGH. The short motif at 622–626 is the 'KMSKS' region element; sequence KMSKS. ATP is bound at residue Lys625.

This sequence belongs to the class-I aminoacyl-tRNA synthetase family.

The protein resides in the cytoplasm. It catalyses the reaction tRNA(Leu) + L-leucine + ATP = L-leucyl-tRNA(Leu) + AMP + diphosphate. In Shewanella denitrificans (strain OS217 / ATCC BAA-1090 / DSM 15013), this protein is Leucine--tRNA ligase.